Reading from the N-terminus, the 38-residue chain is Large ribosomal subunit protein bL36 (38 aa).

The protein belongs to the bacterial ribosomal protein bL36 family.

This chain is Large ribosomal subunit protein bL36, found in Prochlorococcus marinus (strain SARG / CCMP1375 / SS120).